The primary structure comprises 458 residues: Histidine--tRNA ligase (458 aa).

The protein belongs to the class-II aminoacyl-tRNA synthetase family. In terms of assembly, homodimer.

Its subcellular location is the cytoplasm. It catalyses the reaction tRNA(His) + L-histidine + ATP = L-histidyl-tRNA(His) + AMP + diphosphate + H(+). This chain is Histidine--tRNA ligase, found in Micrococcus luteus (strain ATCC 4698 / DSM 20030 / JCM 1464 / CCM 169 / CCUG 5858 / IAM 1056 / NBRC 3333 / NCIMB 9278 / NCTC 2665 / VKM Ac-2230) (Micrococcus lysodeikticus).